A 176-amino-acid chain; its full sequence is 3-hydroxydecanoyl-[acyl-carrier-protein] dehydratase (176 aa).

Residue H75 is part of the active site.

This sequence belongs to the thioester dehydratase family. FabA subfamily. Homodimer.

The protein localises to the cytoplasm. The catalysed reaction is a (3R)-hydroxyacyl-[ACP] = a (2E)-enoyl-[ACP] + H2O. It catalyses the reaction (3R)-hydroxydecanoyl-[ACP] = (2E)-decenoyl-[ACP] + H2O. It carries out the reaction (2E)-decenoyl-[ACP] = (3Z)-decenoyl-[ACP]. It participates in lipid metabolism; fatty acid biosynthesis. Necessary for the introduction of cis unsaturation into fatty acids. Catalyzes the dehydration of (3R)-3-hydroxydecanoyl-ACP to E-(2)-decenoyl-ACP and then its isomerization to Z-(3)-decenoyl-ACP. Can catalyze the dehydratase reaction for beta-hydroxyacyl-ACPs with saturated chain lengths up to 16:0, being most active on intermediate chain length. This is 3-hydroxydecanoyl-[acyl-carrier-protein] dehydratase from Glaesserella parasuis serovar 5 (strain SH0165) (Haemophilus parasuis).